Here is a 144-residue protein sequence, read N- to C-terminus: Maximins 3/H16 (144 aa).

Positions 1-18 are cleaved as a signal peptide; it reads MNFKYIVAVSFLIASAYA. Propeptides lie at residues 19–43 and 73–122; these read RSVQ…REIR and RTAE…KKEK. I143 carries the isoleucine amide modification.

Belongs to the bombinin family. As to expression, expressed by the skin glands.

The protein resides in the secreted. Functionally, maximin-3 shows antibacterial activity against both Gram-positive and Gram-negative bacteria. It also shows antimicrobial activity against the fungus C.albicans, but not against A.flavus nor P.uticale. It has little hemolytic activity. It possess a significant cytotoxicity against tumor cell lines. It possess a significant anti-HIV activity. It shows high spermicidal activity. Maximin-H16 shows antimicrobial activity against bacteria and against the fungus C.albicans. Shows strong hemolytic activity. This chain is Maximins 3/H16, found in Bombina maxima (Giant fire-bellied toad).